A 797-amino-acid chain; its full sequence is Methionine--tRNA ligase, cytoplasmic (797 aa).

A 'HIGH' region motif is present at residues P26 to N36. The 'KMSKS' region motif lies at K348–S352. K351 contacts ATP. A disordered region spans residues D601–I634. The tRNA-binding domain occupies T635–T738.

The protein belongs to the class-I aminoacyl-tRNA synthetase family.

The protein localises to the cytoplasm. Its subcellular location is the cytosol. It catalyses the reaction tRNA(Met) + L-methionine + ATP = L-methionyl-tRNA(Met) + AMP + diphosphate. This chain is Methionine--tRNA ligase, cytoplasmic, found in Arabidopsis thaliana (Mouse-ear cress).